We begin with the raw amino-acid sequence, 291 residues long: ATP synthase gamma chain (291 aa).

It belongs to the ATPase gamma chain family. As to quaternary structure, F-type ATPases have 2 components, CF(1) - the catalytic core - and CF(0) - the membrane proton channel. CF(1) has five subunits: alpha(3), beta(3), gamma(1), delta(1), epsilon(1). CF(0) has three main subunits: a, b and c.

The protein resides in the cell inner membrane. Functionally, produces ATP from ADP in the presence of a proton gradient across the membrane. The gamma chain is believed to be important in regulating ATPase activity and the flow of protons through the CF(0) complex. The chain is ATP synthase gamma chain from Burkholderia multivorans (strain ATCC 17616 / 249).